Here is a 947-residue protein sequence, read N- to C-terminus: Transcriptional regulator WAR1 (947 aa).

Positions 1–10 (MSDTTPEKGS) are enriched in basic and acidic residues. The tract at residues 1 to 52 (MSDTTPEKGSVDSVSPSASNGSNTNNPLNNSSPQPLKSNESDKKPKVTRRSV) is disordered. The span at 19–38 (SNGSNTNNPLNNSSPQPLKS) shows a compositional bias: low complexity. Residues 54–86 (CKSCHSLKVKCTPSDPNNPSAPCVRCINANRIC) constitute a DNA-binding region (zn(2)-C6 fungal-type). The interval 96–222 (RRKKSEILEA…SPTSKDDEIN (127 aa)) is disordered. Over residues 129-142 (NSSENYSSSINNAN) the composition is skewed to low complexity. Composition is skewed to polar residues over residues 143-158 (DSSLTSRYQSPMTFDP) and 167-185 (QASSAVPPISSNLNPQSAA).

In terms of assembly, homodimer.

The protein localises to the nucleus. Transcription factor required for yeast cell adherence to silicone substrate. Plays a role in resistance to weak organic acids such as acetate and sorbate. Binds in vitro to a nitric oxide-responsive element (NORE) but seems not to be involved in response to nitrosative stress. The protein is Transcriptional regulator WAR1 (WAR1) of Candida albicans (strain SC5314 / ATCC MYA-2876) (Yeast).